Reading from the N-terminus, the 508-residue chain is Cyclin-A1-1 (508 aa).

Residues 1–28 are compositionally biased toward low complexity; the sequence is MSSNLAASRRSSSSSSVAAAAAAKRPAV. Disordered stretches follow at residues 1–40 and 82–125; these read MSSN…GKAA and VKKG…ESVL. Over residues 29–39 the composition is skewed to gly residues; that stretch reads GEGGGGGGGKA. Low complexity predominate over residues 98 to 111; that stretch reads ASAVKSASAKPAPA.

Belongs to the cyclin family. Cyclin AB subfamily. In terms of tissue distribution, expressed in the dividing region of the root cap and root apex. Expressed in the intercalary meristem of internodes and in adventitious roots under submergence conditions.

Functionally, involved in the control of the cell cycle at the G2/M (mitosis) transition. The protein is Cyclin-A1-1 (CYCA1-1) of Oryza sativa subsp. japonica (Rice).